The primary structure comprises 126 residues: MSQMDPDAVSKAFVEHYYSTFDTNRVGLAGLYQEASMLTFEGQKIQGVQSIVAKLTSLPFQQCKHHISTVDCQPSGPASGMLVFVSGNLQLAGEEHALKFSQMFHLMPTPQGSFYVFNDIFRLNYA.

Residue Ser-2 is modified to N-acetylserine. Positions 9–123 constitute an NTF2 domain; sequence VSKAFVEHYY…FYVFNDIFRL (115 aa).

As to quaternary structure, interacts with RAN1. Expressed in roots, stems, leaves and flowers, and, at low levels, in siliques.

Its subcellular location is the cytoplasm. The protein resides in the nucleus. It localises to the nucleus envelope. Its function is as follows. Facilitates protein transport into the nucleus. Interacts with various nucleoporins and with Ran-GDP. Could be part of a multicomponent system of cytosolic factors that assemble at the pore complex during nuclear import. The chain is Nuclear transport factor 2B from Arabidopsis thaliana (Mouse-ear cress).